Reading from the N-terminus, the 397-residue chain is Acetate kinase (397 aa).

A Mg(2+)-binding site is contributed by Asn-8. An ATP-binding site is contributed by Lys-15. Arg-89 contributes to the substrate binding site. Asp-146 functions as the Proton donor/acceptor in the catalytic mechanism. Residues 206-210 (HLGNG), 281-283 (DLR), and 329-333 (GIGEN) each bind ATP. Glu-382 is a Mg(2+) binding site.

The protein belongs to the acetokinase family. In terms of assembly, homodimer. Mg(2+) serves as cofactor. It depends on Mn(2+) as a cofactor.

The protein localises to the cytoplasm. The catalysed reaction is acetate + ATP = acetyl phosphate + ADP. Its pathway is metabolic intermediate biosynthesis; acetyl-CoA biosynthesis; acetyl-CoA from acetate: step 1/2. Catalyzes the formation of acetyl phosphate from acetate and ATP. Can also catalyze the reverse reaction. This chain is Acetate kinase, found in Bacillus cytotoxicus (strain DSM 22905 / CIP 110041 / 391-98 / NVH 391-98).